A 252-amino-acid polypeptide reads, in one-letter code: 3-dehydroquinate dehydratase (252 aa).

Residues serine 21, 46–48 (EWR), and arginine 82 contribute to the 3-dehydroquinate site. Residue histidine 143 is the Proton donor/acceptor of the active site. The active-site Schiff-base intermediate with substrate is lysine 170. Arginine 213, serine 232, and glutamine 236 together coordinate 3-dehydroquinate.

The protein belongs to the type-I 3-dehydroquinase family. Homodimer.

It carries out the reaction 3-dehydroquinate = 3-dehydroshikimate + H2O. It participates in metabolic intermediate biosynthesis; chorismate biosynthesis; chorismate from D-erythrose 4-phosphate and phosphoenolpyruvate: step 3/7. Involved in the third step of the chorismate pathway, which leads to the biosynthesis of aromatic amino acids. Catalyzes the cis-dehydration of 3-dehydroquinate (DHQ) and introduces the first double bond of the aromatic ring to yield 3-dehydroshikimate. This chain is 3-dehydroquinate dehydratase, found in Shigella dysenteriae serotype 1 (strain Sd197).